The sequence spans 231 residues: Octanoyltransferase (231 aa).

One can recognise a BPL/LPL catalytic domain in the interval 29-231 (PQDPDLLWLC…GRQLCIWLAP (203 aa)). Substrate is bound by residues 68 to 75 (RGGQVTFH), 164 to 166 (ALG), and 177 to 179 (GVA). The active-site Acyl-thioester intermediate is Cys-195.

The protein belongs to the LipB family.

It localises to the cytoplasm. It carries out the reaction octanoyl-[ACP] + L-lysyl-[protein] = N(6)-octanoyl-L-lysyl-[protein] + holo-[ACP] + H(+). The protein operates within protein modification; protein lipoylation via endogenous pathway; protein N(6)-(lipoyl)lysine from octanoyl-[acyl-carrier-protein]: step 1/2. In terms of biological role, catalyzes the transfer of endogenously produced octanoic acid from octanoyl-acyl-carrier-protein onto the lipoyl domains of lipoate-dependent enzymes. Lipoyl-ACP can also act as a substrate although octanoyl-ACP is likely to be the physiological substrate. In Verminephrobacter eiseniae (strain EF01-2), this protein is Octanoyltransferase.